The chain runs to 416 residues: Exodeoxyribonuclease 7 large subunit (416 aa).

The protein belongs to the XseA family. As to quaternary structure, heterooligomer composed of large and small subunits.

The protein localises to the cytoplasm. The enzyme catalyses Exonucleolytic cleavage in either 5'- to 3'- or 3'- to 5'-direction to yield nucleoside 5'-phosphates.. Functionally, bidirectionally degrades single-stranded DNA into large acid-insoluble oligonucleotides, which are then degraded further into small acid-soluble oligonucleotides. The protein is Exodeoxyribonuclease 7 large subunit of Sulfurimonas denitrificans (strain ATCC 33889 / DSM 1251) (Thiomicrospira denitrificans (strain ATCC 33889 / DSM 1251)).